A 207-amino-acid polypeptide reads, in one-letter code: Protein-L-isoaspartate O-methyltransferase (207 aa).

Residue serine 56 is part of the active site.

The protein belongs to the methyltransferase superfamily. L-isoaspartyl/D-aspartyl protein methyltransferase family.

It localises to the cytoplasm. The catalysed reaction is [protein]-L-isoaspartate + S-adenosyl-L-methionine = [protein]-L-isoaspartate alpha-methyl ester + S-adenosyl-L-homocysteine. Its function is as follows. Catalyzes the methyl esterification of L-isoaspartyl residues in peptides and proteins that result from spontaneous decomposition of normal L-aspartyl and L-asparaginyl residues. It plays a role in the repair and/or degradation of damaged proteins. In Pyrobaculum neutrophilum (strain DSM 2338 / JCM 9278 / NBRC 100436 / V24Sta) (Thermoproteus neutrophilus), this protein is Protein-L-isoaspartate O-methyltransferase.